The following is a 1299-amino-acid chain: Outer capsid protein VP1 (1299 aa).

This sequence belongs to the aquareoviridae outer capsid VP1 protein family.

The protein resides in the virion. The enzyme catalyses a 5'-end diphospho-ribonucleoside in mRNA + GTP + H(+) = a 5'-end (5'-triphosphoguanosine)-ribonucleoside in mRNA + diphosphate. The catalysed reaction is a 5'-end (5'-triphosphoguanosine)-ribonucleoside in mRNA + S-adenosyl-L-methionine = a 5'-end (N(7)-methyl 5'-triphosphoguanosine)-ribonucleoside in mRNA + S-adenosyl-L-homocysteine. Its function is as follows. Outer capsid protein involved in mRNA capping. Catalyzes the last 3 enzymatic activities for formation of the 5' cap structure on the viral plus-strand transcripts, namely the RNA guanylyltransferase, RNA-7N- and RNA-2'O-methyltransferase activities. This chain is Outer capsid protein VP1 (S1), found in Aquareovirus C (isolate Golden shiner/USA/GSRV/1977) (AQRV-C).